A 944-amino-acid polypeptide reads, in one-letter code: Thyroid peroxidase (944 aa).

The N-terminal stretch at 1 to 30 is a signal peptide; that stretch reads MVGLVPAGSAWGGRALAVLGVTLLVALARG. Over 31–858 the chain is Extracellular; the sequence is LLPFFLGGRD…SGRLPKASLV (828 aa). N141 is a glycosylation site (N-linked (GlcNAc...) asparagine). Cysteines 154 and 170 form a disulfide. D250 contacts heme b. The active-site Proton acceptor is H251. D252 provides a ligand contact to Ca(2+). 2 disulfides stabilise this stretch: C271/C281 and C275/C295. N-linked (GlcNAc...) asparagine glycosylation occurs at N316. Residues T330, F332, D334, and S336 each coordinate Ca(2+). N-linked (GlcNAc...) asparagine glycosylation occurs at N351. Residues E408 and H503 each contribute to the heme b site. Cystine bridges form between C606/C663, C704/C729, C750/C790, C776/C802, C808/C822, C816/C831, and C833/C846. N623 is a glycosylation site (N-linked (GlcNAc...) asparagine). The Sushi domain maps to 748-804; the sequence is DACGLPDSLDNGDVVLCGEAGRRVLVFSCRHGFKLQGPEQVACSPRGGAVRAPVCRD. Positions 804–847 constitute an EGF-like; calcium-binding domain; sequence DINECEDASHPPCHGSARCRNTKGGFRCECTDPAVLGEDGTTCV. Residues 859 to 879 traverse the membrane as a helical segment; the sequence is SIALGIVLVVGLAGLTWTLVC. At 880–944 the chain is on the cytoplasmic side; the sequence is RWAHAGRKAS…RSHVAQGSPA (65 aa). The segment at 895 to 944 is disordered; sequence LGGRGAPPPGRGAGQDGASGSLVPPLGPQGRTRAVDPTSSRSHVAQGSPA. The segment covering 931 to 944 has biased composition (polar residues); the sequence is PTSSRSHVAQGSPA.

The protein belongs to the peroxidase family. XPO subfamily. Interacts with DUOX1, DUOX2 and CYBA. Ca(2+) is required as a cofactor. Requires heme b as cofactor. Heme is covalently bound through a H(2)O(2)-dependent autocatalytic process. Heme insertion is important for the delivery of protein at the cell surface. Post-translationally, cleaved in its N-terminal part.

The protein localises to the membrane. The catalysed reaction is 2 iodide + H2O2 + 2 H(+) = diiodine + 2 H2O. It carries out the reaction [thyroglobulin]-L-tyrosine + iodide + H2O2 + H(+) = [thyroglobulin]-3-iodo-L-tyrosine + 2 H2O. It catalyses the reaction [thyroglobulin]-3-iodo-L-tyrosine + iodide + H2O2 + H(+) = [thyroglobulin]-3,5-diiodo-L-tyrosine + 2 H2O. The enzyme catalyses 2 [thyroglobulin]-3,5-diiodo-L-tyrosine + H2O2 = [thyroglobulin]-L-thyroxine + [thyroglobulin]-dehydroalanine + 2 H2O. The catalysed reaction is [thyroglobulin]-3-iodo-L-tyrosine + [thyroglobulin]-3,5-diiodo-L-tyrosine + H2O2 = [thyroglobulin]-3,3',5-triiodo-L-thyronine + [thyroglobulin]-dehydroalanine + 2 H2O. It functions in the pathway hormone biosynthesis; thyroid hormone biosynthesis. In terms of biological role, iodination and coupling of the hormonogenic tyrosines in thyroglobulin to yield the thyroid hormones T(3) and T(4). This is Thyroid peroxidase (TPO) from Canis lupus familiaris (Dog).